We begin with the raw amino-acid sequence, 333 residues long: MQTSAEMGGIIEAMPALAQDGYALEQAPPEHCPGPASENAGKGDACQGCANKDICESLPKGPDPDVALITQNLAPVRHKVLVLSGKGGVGKSTFSAMLGWALSADEALQVGVMDLDICGPSLPHMLGCVNETVHESSVGWTPVYVADNLAAMSIQFMLPEDDSAVIWRGAKKNALIKRFLKDVYWDELDYLVVDTPPGTSDEHITINTLLKESGIDGALVVTTPQEVALLDVRKELDFCRKAGIRVLGLVENMSGFVCPSCENESTIFKPTTGGGRALCEELGIKFLGAVPIDPRIGRCCDSGESFLDAYPDSPASTAIMHVVEALRDAVGDV.

[4Fe-4S] cluster contacts are provided by C32, C46, C49, and C55. An ATP-binding site is contributed by 85–92 (GKGGVGKS). 2 residues coordinate [4Fe-4S] cluster: C258 and C261.

Belongs to the Mrp/NBP35 ATP-binding proteins family. NUBP1/NBP35 subfamily. Heterotetramer of 2 NBP35 and 2 CFD1 chains. Requires [4Fe-4S] cluster as cofactor.

It is found in the cytoplasm. The protein resides in the nucleus. In terms of biological role, component of the cytosolic iron-sulfur (Fe/S) protein assembly (CIA) machinery. Required for maturation of extramitochondrial Fe-S proteins. The NBP35-CFD1 heterotetramer forms a Fe-S scaffold complex, mediating the de novo assembly of an Fe-S cluster and its transfer to target apoproteins. Required for biogenesis and export of both ribosomal subunits, which may reflect a role in assembly of the Fe/S clusters in RLI1, a protein which performs rRNA processing and ribosome export. This chain is Cytosolic Fe-S cluster assembly factor NBP35, found in Eremothecium gossypii (strain ATCC 10895 / CBS 109.51 / FGSC 9923 / NRRL Y-1056) (Yeast).